Consider the following 207-residue polypeptide: Sodium/potassium-transporting ATPase subunit beta-1-interacting protein 1 (207 aa).

The signal sequence occupies residues 1 to 21 (MGKCSGRCTLVAFCCLQLVAA). At 22–34 (LERQIFDFLGYQW) the chain is on the extracellular side. The chain crosses the membrane as a helical span at residues 35–55 (APILANFLHIMAVILGIFGTV). Residues 56–61 (QYRSRY) lie on the Cytoplasmic side of the membrane. The helical transmembrane segment at 62 to 82 (LILYAAWLVLWVGWNAFIICF) threads the bilayer. Over 83–146 (YLEVGQLSQD…GCLLDYPYIE (64 aa)) the chain is Extracellular. An N-linked (GlcNAc...) asparagine glycan is attached at Asn-100. Residues 147 to 167 (ALSSALQIFLALFGFVFACYV) form a helical membrane-spanning segment. Residues 168–207 (SKVFLEEEDSFDFIGGFDSYGYQAPQKTSHLQLQPLYTSG) are Cytoplasmic-facing.

It belongs to the NKAIN family. As to quaternary structure, interacts with ATP1B1 C-terminus.

Its subcellular location is the cell membrane. In Homo sapiens (Human), this protein is Sodium/potassium-transporting ATPase subunit beta-1-interacting protein 1 (NKAIN1).